A 43-amino-acid polypeptide reads, in one-letter code: Antimicrobial protein PcfHb (43 aa).

Possible monomer. As to expression, expressed in mucus-secreting tissues.

The protein localises to the secreted. Shows antimicrobial activity against M.luteus (MIC=4 uM) and E.coli (MIC=12 uM), as well as against the yeast C.tropicalis (MIC=4 uM). Shows a pro-inflammatory effect, since the topical application of the protein induces an increase of cellular recruitment characterized by an increase in the number of leukocyte rolling. Does not show hemolytic activity on human erythrocytes (at doses up to 100 uM). This Potamotrygon cf. henlei (Freshwater stingray) protein is Antimicrobial protein PcfHb.